Consider the following 207-residue polypeptide: Guanylate kinase (207 aa).

The 181-residue stretch at 4 to 184 (GTLYIVSAPS…ALMDFKAILR (181 aa)) folds into the Guanylate kinase-like domain. Residue 11 to 18 (APSGAGKS) participates in ATP binding.

This sequence belongs to the guanylate kinase family.

It localises to the cytoplasm. The enzyme catalyses GMP + ATP = GDP + ADP. Functionally, essential for recycling GMP and indirectly, cGMP. This is Guanylate kinase from Vibrio parahaemolyticus serotype O3:K6 (strain RIMD 2210633).